Reading from the N-terminus, the 259-residue chain is Type III pantothenate kinase (259 aa).

Position 6–13 (6–13 (DVGNTNCT)) interacts with ATP. Residue 107 to 110 (GSDR) participates in substrate binding. The Proton acceptor role is filled by D109. K(+) is bound at residue D129. T132 contributes to the ATP binding site. T184 lines the substrate pocket.

This sequence belongs to the type III pantothenate kinase family. Homodimer. The cofactor is NH4(+). K(+) is required as a cofactor.

It localises to the cytoplasm. It carries out the reaction (R)-pantothenate + ATP = (R)-4'-phosphopantothenate + ADP + H(+). It functions in the pathway cofactor biosynthesis; coenzyme A biosynthesis; CoA from (R)-pantothenate: step 1/5. In terms of biological role, catalyzes the phosphorylation of pantothenate (Pan), the first step in CoA biosynthesis. This Listeria monocytogenes serovar 1/2a (strain ATCC BAA-679 / EGD-e) protein is Type III pantothenate kinase.